Reading from the N-terminus, the 333-residue chain is MKFLQQMRKLFGLAAKFPARLTIAVIGTALLAGLVGVVGDTAIAVAFSKPGLPVEYLQVPSPSMGHDIKIQFQGGGQHAVYLLDGLRAQEDYNGWDINTPAFEEYYHSGLSVIMPVGGQSSFYSNWYQPSQGNGQHYTYKWETFLTQEMPSWLQANKNVLPTGNAAVGLSMSGSSALILASYYPQQFPYAASLSGFLNPSEGWWPTMIGLAMNDSGGYNANSMWGPSTDPAWKRNDPMVQIPRLVANNTRIWVYCGNGAPNELGGDNIPAKFLESLTLSTNEIFQNTYAASGGRNGVFNFPPNGTHSWPYWNQQLVAMKPDIQQILNGSNNNA.

An N-terminal signal peptide occupies residues 1-44 (MKFLQQMRKLFGLAAKFPARLTIAVIGTALLAGLVGVVGDTAIA). A substrate-binding site is contributed by 86 to 87 (LR). The segment at 102–112 (FEEYYHSGLSV) is fibronectin-binding. Ser170 and Asn198 together coordinate substrate. The active-site Nucleophile is the Ser170. The active site involves Glu274. Residues 276–279 (LTLS) and 306–308 (HSW) each bind substrate. His306 is an active-site residue.

Belongs to the mycobacterial A85 antigen family. In terms of assembly, homodimer.

It is found in the secreted. The catalysed reaction is an acyl-CoA + a 1,2-diacyl-sn-glycerol = a triacyl-sn-glycerol + CoA. The enzyme catalyses 2 alpha,alpha'-trehalose 6-mycolate = alpha,alpha'-trehalose 6,6'-bismycolate + alpha,alpha-trehalose. The antigen 85 proteins (FbpA, FbpB, FbpC) are responsible for the high affinity of mycobacteria to fibronectin, a large adhesive glycoprotein, which facilitates the attachment of M.tuberculosis to murine alveolar macrophages (AMs). They also help to maintain the integrity of the cell wall by catalyzing the transfer of mycolic acids to cell wall arabinogalactan and through the synthesis of alpha,alpha-trehalose dimycolate (TDM, cord factor). They catalyze the transfer of a mycoloyl residue from one molecule of alpha,alpha-trehalose monomycolate (TMM) to another TMM, leading to the formation of TDM. The polypeptide is Diacylglycerol acyltransferase/mycolyltransferase Ag85C (fbpC) (Mycobacterium leprae (strain TN)).